Here is a 154-residue protein sequence, read N- to C-terminus: Myoglobin (154 aa).

Residues 2 to 148 enclose the Globin domain; sequence GLSDAEWQLV…FRNDIAAQYK (147 aa). Phosphoserine is present on Ser-4. His-65 provides a ligand contact to nitrite. Residue His-65 participates in O2 binding. The residue at position 68 (Thr-68) is a Phosphothreonine. Heme b is bound at residue His-94.

It belongs to the globin family. As to quaternary structure, monomeric.

The protein resides in the cytoplasm. It is found in the sarcoplasm. The enzyme catalyses Fe(III)-heme b-[protein] + nitric oxide + H2O = Fe(II)-heme b-[protein] + nitrite + 2 H(+). The catalysed reaction is H2O2 + AH2 = A + 2 H2O. Monomeric heme protein which primary function is to store oxygen and facilitate its diffusion within muscle tissues. Reversibly binds oxygen through a pentacoordinated heme iron and enables its timely and efficient release as needed during periods of heightened demand. Depending on the oxidative conditions of tissues and cells, and in addition to its ability to bind oxygen, it also has a nitrite reductase activity whereby it regulates the production of bioactive nitric oxide. Under stress conditions, like hypoxia and anoxia, it also protects cells against reactive oxygen species thanks to its pseudoperoxidase activity. This chain is Myoglobin (MB), found in Oryctolagus cuniculus (Rabbit).